Consider the following 766-residue polypeptide: MVKLDDKNKKFKGKKKVKNVLEKKAKGLKLNKVDRKRIVKIEEKAALKSKVDKAVKDELERLKKSSSTSVFDNDGTRDSLCSESSFGSQPAPKKKSKKVLFSGELEHVKVFDKRVQDLQIKPSEASPGRGILRSPLDKKVKKLAKVKTVKVAQEEEEEHSAPPKKKVKVNAEKAVASEPADDENLESVDEQAGGDESHIDIPTLKRKRVAIQVTKSVKEQLLNMPRKERKAFLKELKLKRKPEGARAQKCKELWEKIRMGKTPKAEKDTAVHELYGLVKGHAAKLIYAHDTSRVIECLVATEREGIINNLFNELTPEIVRMSKNVYSKFFVKKMLKNGTKEQRDIIINAFRGHAPTLLRIKHAAEVLEYAYNDFANAHQRYNIITEFYGKEFILFREDNIRSLTEILAEKPEKKVVILKHLDEVIGAVNEKETLRLSILHKLMLDFFDNCDEEKKINLLDSLKDKIPEFIHTPDGAKLAIKLIWFAPVKERKLIVKNFKDLSVKAAMEHYGHRVLLALFDTVDDTVLLNKVIVSELANEMKKLIEDDWGEKVIHYLVHPRDGRGIDKREITFLAEGDSNPHSKKTQKDRYGQLYAGITENLYPYLAANFEELVFEANKSKFVAACLETTSSFDLFDRQVPAEARKSCNQAIVELAKKDFVPMDQEGFHIIEHQSGNFILMAVMRCDAALQEDERLSVALAEGLTSKQLGSWVTCNRGCHVLLKMLQVGGPKVIEKLKASISRKHLDGYNSKGANLLKAQLDGNVKK.

2 disordered regions span residues 63-98 (KKSS…KSKK) and 152-197 (AQEE…GDES). Over residues 79 to 88 (SLCSESSFGS) the composition is skewed to polar residues. Acidic residues predominate over residues 179 to 193 (PADDENLESVDEQAG). In terms of domain architecture, PUM-HD spans 245–602 (ARAQKCKELW…LYAGITENLY (358 aa)). Pumilio repeat units lie at residues 313 to 348 (ELTP…IIIN), 461 to 496 (SLKD…LIVK), 497 to 534 (NFKD…VIVS), and 535 to 571 (ELAN…REIT).

The chain is Pumilio domain-containing protein 12 (puf-12) from Caenorhabditis elegans.